The following is a 325-amino-acid chain: Oligopeptide transport system permease protein OppB (325 aa).

The next 6 membrane-spanning stretches (helical) occupy residues 12–32 (YLVL…LAFS), 102–122 (LVVG…WGAI), 135–155 (LALL…ILGA), 189–208 (LQHL…AGFS), 248–268 (IPMA…AVFV), and 290–310 (TNIV…AGLL). Positions 95-311 (IGVSLRLLVV…AVVLLAGLLS (217 aa)) constitute an ABC transmembrane type-1 domain.

Belongs to the binding-protein-dependent transport system permease family. OppBC subfamily. In terms of assembly, the complex is composed of an ATP-binding protein (OppD), two transmembrane proteins (OppB and OppC) and a solute-binding protein (OppA).

It localises to the cell inner membrane. Part of the ABC transporter complex OppABCD involved in the uptake of oligopeptides. Responsible for the translocation of the substrate across the membrane. This Mycobacterium bovis (strain ATCC BAA-935 / AF2122/97) protein is Oligopeptide transport system permease protein OppB.